The primary structure comprises 466 residues: Asparagine--tRNA ligase (466 aa).

This sequence belongs to the class-II aminoacyl-tRNA synthetase family. In terms of assembly, homodimer.

It is found in the cytoplasm. The enzyme catalyses tRNA(Asn) + L-asparagine + ATP = L-asparaginyl-tRNA(Asn) + AMP + diphosphate + H(+). The sequence is that of Asparagine--tRNA ligase from Shewanella denitrificans (strain OS217 / ATCC BAA-1090 / DSM 15013).